The chain runs to 379 residues: Probable homogentisate phytyltransferase 2, chloroplastic (379 aa).

A disordered region spans residues 1-39 (MASLASPPLPCRAAATASRSGRPAPRLLGPPPPPASPLL). A chloroplast-targeting transit peptide spans 1–65 (MASLASPPLP…WSRRDAVRVC (65 aa)). Transmembrane regions (helical) follow at residues 121-141 (WLVF…GYIV), 174-194 (LVVL…GPFI), 195-215 (TSLY…PFRL), 220-240 (VAAF…GVYY), 252-272 (WSSP…VIAI), 299-319 (IAFL…AVAF), 328-348 (TVMV…TWVL), and 361-378 (YYRF…FFPL).

This sequence belongs to the UbiA prenyltransferase family.

It localises to the plastid. Its subcellular location is the chloroplast thylakoid membrane. The enzyme catalyses phytyl diphosphate + homogentisate + H(+) = 2-methyl-6-phytyl-1,4-benzene-1,4-diol + CO2 + diphosphate. The protein operates within cofactor biosynthesis; tocopherol biosynthesis. Functionally, involved in the synthesis of tocopherol (vitamin E). Catalyzes the condensation of homogentisate and phytyl diphosphate to form dimethylphytylhydrquinone. The sequence is that of Probable homogentisate phytyltransferase 2, chloroplastic (HPT2) from Oryza sativa subsp. japonica (Rice).